The sequence spans 813 residues: LPS-assembly protein LptD (813 aa).

Residues 1-22 (MRRALRLLPLPLSIAICLPAMA) form the signal peptide.

This sequence belongs to the LptD family. Component of the lipopolysaccharide transport and assembly complex. Interacts with LptE and LptA.

It is found in the cell outer membrane. Together with LptE, is involved in the assembly of lipopolysaccharide (LPS) at the surface of the outer membrane. The polypeptide is LPS-assembly protein LptD (Xanthomonas oryzae pv. oryzae (strain MAFF 311018)).